Here is a 215-residue protein sequence, read N- to C-terminus: Ependymin-2 (215 aa).

The signal sequence occupies residues 1-20; that stretch reads MHTVKLLCVVFSCLCAVAWA. 2 N-linked (GlcNAc...) asparagine glycosylation sites follow: N71 and N94.

It belongs to the ependymin family. In terms of assembly, forms disulfide-linked dimers. Post-translationally, different glycosylation variants are known as EPD-beta and EPD-gamma. Binds calcium through the terminal sialic acids. EPDs are synthesized in the meninx and secreted in the cerebrospinal fluid.

Its subcellular location is the secreted. In terms of biological role, may play a role in neural plasticity. May be involved during axon regeneration. The polypeptide is Ependymin-2 (epd2) (Carassius auratus (Goldfish)).